Here is a 345-residue protein sequence, read N- to C-terminus: Tubulin-folding cofactor C (345 aa).

M1 carries the N-acetylmethionine modification. Residues 1–10 (MEDDGQSSVA) show a composition bias toward polar residues. The interval 1-83 (MEDDGQSSVA…SRLASSSTDS (83 aa)) is disordered. A compositionally biased stretch (basic and acidic residues) spans 23-39 (DMLERLSARHQARKSDS). Residues 40–55 (PDSSSSSSSTLESTSS) are compositionally biased toward low complexity. Positions 61 to 73 (SDSKRSIESRIAE) are enriched in basic and acidic residues. Low complexity predominate over residues 74–83 (SRLASSSTDS). In terms of domain architecture, C-CAP/cofactor C-like spans 169-318 (PPKLVPVRDS…NWANVDDFRW (150 aa)).

Belongs to the TBCC family. As to quaternary structure, supercomplex made of cofactors A to E. Cofactors A and D function by capturing and stabilizing tubulin in a quasi-native conformation. Cofactor E binds to the cofactor D-tubulin complex; interaction with cofactor C then causes the release of tubulin polypeptides that are committed to the native state. In terms of tissue distribution, ubiquitously expressed (at protein level). Present in leaves, roots, flowers, and stems.

Its subcellular location is the cytoplasm. Essential tubulin-folding protein involved in the final step of the tubulin folding pathway. Required for continuous microtubule cytoskeleton organization, mitotic division, cytokinesis, and to couple cell cycle progression to cell division in embryos and endosperms. Not essential for cell viability. Binds probably to the multimeric supercomplex, stimulating GTP hydrolysis by the bound beta-tubulin and the release of the alpha-/beta-tubulin heterodimer. This Arabidopsis thaliana (Mouse-ear cress) protein is Tubulin-folding cofactor C (TFCC).